The primary structure comprises 377 residues: Histidinol-phosphate aminotransferase (377 aa).

The residue at position 230 (lysine 230) is an N6-(pyridoxal phosphate)lysine.

Belongs to the class-II pyridoxal-phosphate-dependent aminotransferase family. Histidinol-phosphate aminotransferase subfamily. In terms of assembly, homodimer. The cofactor is pyridoxal 5'-phosphate.

It carries out the reaction L-histidinol phosphate + 2-oxoglutarate = 3-(imidazol-4-yl)-2-oxopropyl phosphate + L-glutamate. It participates in amino-acid biosynthesis; L-histidine biosynthesis; L-histidine from 5-phospho-alpha-D-ribose 1-diphosphate: step 7/9. The sequence is that of Histidinol-phosphate aminotransferase from Mycobacterium leprae (strain Br4923).